Here is a 398-residue protein sequence, read N- to C-terminus: Aspartic protease 3 (398 aa).

Positions 1-17 are cleaved as a signal peptide; the sequence is MSGRVFLLLALVALASA. Positions 18 to 55 are cleaved as a propeptide — removed in mature form; that stretch reads IQRIKLEKRTYTREQYKFGSIQEHLKAKYVPGYIPNKD. One can recognise a Peptidase A1 domain in the interval 69–392; the sequence is YYGPVTIGTP…DHGNKRVGFA (324 aa). Aspartate 87 is an active-site residue. A disulfide bond links cysteine 100 and cysteine 107. Residue aspartate 279 is part of the active site. The cysteines at positions 313 and 351 are disulfide-linked. Asparagine 321 is a glycosylation site (N-linked (GlcNAc...) asparagine).

The protein belongs to the peptidase A1 family. Highly expressed in intestine and to a lower extent in body wall muscles, hypodermis and neurons.

The protein localises to the cytoplasm. It is found in the lysosome. It localises to the secreted. In terms of biological role, aspartic protease. Part of the necrosis cell death pathway. Involved in neuronal cell degeneration. Involved in heat stress response. The sequence is that of Aspartic protease 3 from Caenorhabditis elegans.